The sequence spans 563 residues: MTAQNRFRDTEIRASRGTKLTAKSWMTEAPLRMLMNNLDPEVAENPKELVVYGGIGRAARNWECYDKIVESLTHLNDDETLLIQSGKPVGVFKTHSNAPRVLIANSNLVPHWANWEHFNELDVKGLAMYGQMTAGSWIYIGSQGIVQGTYETFVEAGRQHFGGSLKGRWVLTAGLGGMGGAQPLAATLAGACSLNIECQQSRIDFRLKTRYVDEQATDFDDALARIKKYTSAGKAVSIALCGNAAEILPELVRRGVRPDMVTDQTSAHDPLNGYLPKGWSWEEYRRRAQSEPVLVVNAAKTSMAEHVEAMLAFHHMGIPTFDYGNNIRQMAQDMGVTHAFDFPGFVPAYIRPLFCRGVGPFRWAALSGDAEDIYKTDAKVKELIPDDEHLHHWLDMARERISFQGLPARICWVGLGQRAKLGLAFNEMVRTGELSAPIVIGRDHLDSGSVASPNRETEAMQDGSDAVSDWPLLNALLNTASGATWVSLHHGGGVGMGFSQHSGMVVVCDGSDDAAERIARVLHNDPATGVMRHADAGYDIAINCAQEQGLNLPMIAATQGRKA.

NAD(+) is bound by residues 53–54 (GG), Q131, 177–179 (GMG), E197, R202, 243–244 (NA), 264–268 (QTSAH), 274–275 (YL), and Y323. C411 is an active-site residue. Position 493 (G493) interacts with NAD(+).

The protein belongs to the urocanase family. NAD(+) is required as a cofactor.

The protein localises to the cytoplasm. The enzyme catalyses 4-imidazolone-5-propanoate = trans-urocanate + H2O. Its pathway is amino-acid degradation; L-histidine degradation into L-glutamate; N-formimidoyl-L-glutamate from L-histidine: step 2/3. In terms of biological role, catalyzes the conversion of urocanate to 4-imidazolone-5-propionate. This chain is Urocanate hydratase, found in Yersinia enterocolitica serotype O:8 / biotype 1B (strain NCTC 13174 / 8081).